Here is a 189-residue protein sequence, read N- to C-terminus: T cell receptor gamma constant 2 (189 aa).

An Ig-like domain is found at 10 to 104; the sequence is PKPTIFLPSI…NKNGIDQEII (95 aa). An intrachain disulfide couples C32 to C88. 5 N-linked (GlcNAc...) asparagine glycosylation sites follow: N66, N120, N136, N142, and N151. A helical membrane pass occupies residues 155-177; the sequence is YYTYLLLLLKSVVYFAIITCCLL.

As to quaternary structure, gamma-delta TR is a heterodimer composed of a gamma and delta chain; disulfide-linked. The gamma-delta TR is associated with the transmembrane signaling CD3 coreceptor proteins following the stoichiometry: a single gamma-delta TR heterodimer associates with one CD3D-CD3E heterodimer, one CD3G-CD3E heterodimer and one CD247 homodimer forming a stable octameric structure. Upon activation, gamma-delta TR complex associates with FCER1G to initiate intracellular signaling.

It is found in the cell membrane. Functionally, constant region of T cell receptor (TR) gamma chain that participates in the antigen recognition. Gamma-delta TRs recognize a variety of self and foreign non-peptide antigens frequently expressed at the epithelial boundaries between the host and external environment, including endogenous lipids presented by MH-like protein CD1D and phosphoantigens presented by butyrophilin-like molecule BTN3A1. Upon antigen recognition induces rapid, innate-like immune responses involved in pathogen clearance and tissue repair. Binding of gamma-delta TR complex to antigen triggers phosphorylation of immunoreceptor tyrosine-based activation motifs (ITAMs) in the CD3 chains by the LCK and FYN kinases, allowing the recruitment, phosphorylation, and activation of ZAP70 that facilitates phosphorylation of the scaffolding proteins LCP2 and LAT. This lead to the formation of a supramolecular signalosome that recruits the phospholipase PLCG1, resulting in calcium mobilization and ERK activation, ultimately leading to T cell expansion and differentiation into effector cells. Gamma-delta TRs are produced through somatic rearrangement of a limited repertoire of variable (V), diversity (D), and joining (J) genes. The potential diversity of gamma-delta TRs is conferred by the unique ability to rearrange (D) genes in tandem and to utilize all three reading frames. The combinatorial diversity is considerably increased by the sequence exonuclease trimming and random nucleotide (N) region additions which occur during the V-(D)-J rearrangements. The protein is T cell receptor gamma constant 2 of Homo sapiens (Human).